A 964-amino-acid chain; its full sequence is Protein translocase subunit SecA (964 aa).

Residues Gln86, 104–108 (GEGKT), and Asp494 each bind ATP. The interval 846-964 (ETAESADTIA…YKMCHGQNEA (119 aa)) is disordered. A compositionally biased stretch (acidic residues) spans 871 to 882 (AEGEVEEEDEDT). The span at 887–900 (AIAESAAASEAGES) shows a compositional bias: low complexity. Cys947, Cys949, Cys958, and His959 together coordinate Zn(2+).

Belongs to the SecA family. As to quaternary structure, monomer and homodimer. Part of the essential Sec protein translocation apparatus which comprises SecA, SecYEG and auxiliary proteins SecDF. Other proteins may also be involved. Zn(2+) is required as a cofactor.

The protein resides in the cell membrane. Its subcellular location is the cytoplasm. The catalysed reaction is ATP + H2O + cellular proteinSide 1 = ADP + phosphate + cellular proteinSide 2.. In terms of biological role, part of the Sec protein translocase complex. Interacts with the SecYEG preprotein conducting channel. Has a central role in coupling the hydrolysis of ATP to the transfer of proteins into and across the cell membrane, serving as an ATP-driven molecular motor driving the stepwise translocation of polypeptide chains across the membrane. The polypeptide is Protein translocase subunit SecA (Bifidobacterium longum subsp. infantis (strain ATCC 15697 / DSM 20088 / JCM 1222 / NCTC 11817 / S12)).